Here is a 333-residue protein sequence, read N- to C-terminus: 5-formaminoimidazole-4-carboxamide-1-(beta)-D-ribofuranosyl 5'-monophosphate synthetase (333 aa).

5-amino-1-(5-phospho-beta-D-ribosyl)imidazole-4-carboxamide-binding residues include H10 and S70. The ATP-grasp domain occupies 91–324 (KEVLKWESDR…IAREIKIAIE (234 aa)). Residues 121 to 181 (PDDI…VPIY) and E203 each bind ATP. 5-amino-1-(5-phospho-beta-D-ribosyl)imidazole-4-carboxamide is bound at residue N231. Residues E269 and E282 each coordinate Mg(2+).

Belongs to the phosphohexose mutase family. It depends on Mg(2+) as a cofactor. Requires Mn(2+) as cofactor.

It carries out the reaction 5-amino-1-(5-phospho-beta-D-ribosyl)imidazole-4-carboxamide + formate + ATP = 5-formamido-1-(5-phospho-D-ribosyl)imidazole-4-carboxamide + ADP + phosphate. It participates in purine metabolism; IMP biosynthesis via de novo pathway; 5-formamido-1-(5-phospho-D-ribosyl)imidazole-4-carboxamide from 5-amino-1-(5-phospho-D-ribosyl)imidazole-4-carboxamide (formate route): step 1/1. In terms of biological role, catalyzes the ATP- and formate-dependent formylation of 5-aminoimidazole-4-carboxamide-1-beta-d-ribofuranosyl 5'-monophosphate (AICAR) to 5-formaminoimidazole-4-carboxamide-1-beta-d-ribofuranosyl 5'-monophosphate (FAICAR) in the absence of folates. In Pyrococcus horikoshii (strain ATCC 700860 / DSM 12428 / JCM 9974 / NBRC 100139 / OT-3), this protein is 5-formaminoimidazole-4-carboxamide-1-(beta)-D-ribofuranosyl 5'-monophosphate synthetase.